The following is a 319-amino-acid chain: Annexin D4 (319 aa).

Annexin repeat units lie at residues 1–75 and 86–157; these read MALP…EFSR and HPWE…GLVS. Ca(2+) contacts are provided by G19, G21, and E72. Position 115 is a phosphothreonine (T115). Residues Y159 and Y211 each carry the phosphotyrosine modification. 2 Annexin repeats span residues 169–240 and 241–316; these read DSAK…ICLL and KPAL…TLLS. S277 carries the phosphoserine modification. Position 287 is a phosphotyrosine (Y287).

The protein belongs to the annexin (TC 1.A.31.1) family. Expressed mainly in roots and flowers. Lower in stems and leaves.

In terms of biological role, may be involved in osmotic stress and abscisic acid signaling in a calcium-dependent manner. This Arabidopsis thaliana (Mouse-ear cress) protein is Annexin D4 (ANN4).